The chain runs to 193 residues: Acyl carrier protein phosphodiesterase (193 aa).

The protein belongs to the AcpH family.

The catalysed reaction is holo-[ACP] + H2O = apo-[ACP] + (R)-4'-phosphopantetheine + H(+). In terms of biological role, converts holo-ACP to apo-ACP by hydrolytic cleavage of the phosphopantetheine prosthetic group from ACP. This Escherichia coli O6:K15:H31 (strain 536 / UPEC) protein is Acyl carrier protein phosphodiesterase.